A 234-amino-acid chain; its full sequence is Ponticulin-like protein J (234 aa).

Positions 1-20 are cleaved as a signal peptide; sequence MRLLNNLILMVVLFVAVSNA. 4 N-linked (GlcNAc...) asparagine glycosylation sites follow: Asn19, Asn143, Asn166, and Asn206. The disordered stretch occupies residues 115 to 213; the sequence is TIKCGTLPPD…SDNETAEGNN (99 aa). The segment covering 154-195 has biased composition (low complexity); it reads KSTPKSPSTPKTNNSNEDSDLTTSSSDSSSSTKSSPKSKSST. Residue Asn212 is the site of GPI-like-anchor amidated asparagine attachment. A glycan (N-linked (GlcNAc...) asparagine) is linked at Asn213. Residues 213–234 constitute a propeptide, removed in mature form; sequence NASSNIATFSLVIISLLVASLF.

It belongs to the ponticulin family. Post-translationally, the GPI-like-anchor contains a phosphoceramide group, rather than a phosphatidyl group.

The protein localises to the cell membrane. Functionally, binds F-actin and nucleates actin assembly. The protein is Ponticulin-like protein J (ponJ) of Dictyostelium discoideum (Social amoeba).